The sequence spans 109 residues: Cell division protein ZapA (109 aa).

Residues P21–Q97 are a coiled coil.

This sequence belongs to the ZapA family. Type 1 subfamily. In terms of assembly, homodimer. Interacts with FtsZ.

It localises to the cytoplasm. Activator of cell division through the inhibition of FtsZ GTPase activity, therefore promoting FtsZ assembly into bundles of protofilaments necessary for the formation of the division Z ring. It is recruited early at mid-cell but it is not essential for cell division. This Salmonella agona (strain SL483) protein is Cell division protein ZapA.